The sequence spans 246 residues: Proteasome subunit beta type-4 (246 aa).

The propeptide occupies 1–23; it reads MTTFSVPIDNGDSMKIAEEESQR. Threonine 24 functions as the Nucleophile in the catalytic mechanism.

Belongs to the peptidase T1B family. In terms of assembly, component of the 20S core complex of the 26S proteasome. The 26S proteasome is composed of a core protease (CP), known as the 20S proteasome, capped at one or both ends by the 19S regulatory particle (RP/PA700). The 20S proteasome core is composed of 28 subunits that are arranged in four stacked rings, resulting in a barrel-shaped structure. The two end rings are each formed by seven alpha subunits, and the two central rings are each formed by seven beta subunits. The catalytic chamber with the active sites is on the inside of the barrel. In terms of tissue distribution, ubiquitous low levels, higher expression in siliques and flowers.

It is found in the cytoplasm. Its subcellular location is the nucleus. Its function is as follows. Non-catalytic component of the proteasome, a multicatalytic proteinase complex which is characterized by its ability to cleave peptides with Arg, Phe, Tyr, Leu, and Glu adjacent to the leaving group at neutral or slightly basic pH. The proteasome has an ATP-dependent proteolytic activity. The polypeptide is Proteasome subunit beta type-4 (PBG1) (Arabidopsis thaliana (Mouse-ear cress)).